The primary structure comprises 224 residues: Claudin-19 (224 aa).

Residues 1 to 7 (MANSGLQ) are Cytoplasmic-facing. The chain crosses the membrane as a helical span at residues 8–28 (LLGYFLALGGWVGIIASTALP). Topologically, residues 29–81 (QWKQSSYAGDAIITAVGLYEGLWMSCASQSTGQVQCKLYDSLLALDGHIQSAR) are extracellular. Cys-54 and Cys-64 are disulfide-bonded. Residues 82–102 (ALMVVAVLLGFVAMVLSVVGM) form a helical membrane-spanning segment. At 103–117 (KCTRVGDSNPTAKGR) the chain is on the cytoplasmic side. The chain crosses the membrane as a helical span at residues 118–138 (VAISGGALFLLAGLCTLTAVS). The Extracellular portion of the chain corresponds to 139 to 160 (WYATLVTQEFFNPSTPVNARYE). Residues 161–181 (FGPALFVGWASAGLAILGGSF) form a helical membrane-spanning segment. At 182-224 (LCCTCPEPERANSIPQPYRSGPSTAAREPVVKLSTSVKGPLGV) the chain is on the cytoplasmic side.

The protein belongs to the claudin family. In terms of assembly, can form homo- and heteropolymeric tight junction strands. Interacts with other claudins including CLDN3, CLDN10, CLDN16 and CLDN18 with highest affinity for CLDN16. Interacts (via PDZ-binding motif TRV) with TJP1 (via PDZ domain).

The protein resides in the cell junction. Its subcellular location is the tight junction. It is found in the cell membrane. The catalysed reaction is Mg(2+)(in) = Mg(2+)(out). It carries out the reaction Ca(2+)(in) = Ca(2+)(out). It catalyses the reaction Na(+)(in) = Na(+)(out). The enzyme catalyses K(+)(in) = K(+)(out). The catalysed reaction is Rb(+)(in) = Rb(+)(out). It carries out the reaction Cs(+)(in) = Cs(+)(out). It catalyses the reaction Li(+)(in) = Li(+)(out). Functionally, forms paracellular channels: coassembles with CLDN16 into tight junction strands with cation-selective channels through the strands, conveying epithelial permeability in a process known as paracellular tight junction permeability. Involved in the maintenance of ion gradients along the nephron. In the thick ascending limb (TAL) of Henle's loop, facilitates sodium paracellular permeability from the interstitial compartment to the lumen, contributing to the lumen-positive transepithelial potential that drives paracellular magnesium and calcium reabsorption. Forms paracellular barriers on its own. In the peripheral nervous system, represents a major constituent of the tight junctions in Schwann cells and contributes to electrical sealing. During retinal neurogenesis, may regulate the barrier properties of tight junctions in retinal pigment epithelium, required for proper retinal tissue differentiation and vision. This chain is Claudin-19, found in Rattus norvegicus (Rat).